Here is a 54-residue protein sequence, read N- to C-terminus: uncharacterized protein (54 aa).

This is an uncharacterized protein from Rhizobium etli.